A 480-amino-acid polypeptide reads, in one-letter code: Siroheme synthase 1 (480 aa).

The precorrin-2 dehydrogenase /sirohydrochlorin ferrochelatase stretch occupies residues methionine 1–leucine 203. NAD(+) is bound by residues glutamate 22–valine 23 and leucine 43–alanine 44. Serine 128 carries the phosphoserine modification. Residues glycine 222–alanine 480 form a uroporphyrinogen-III C-methyltransferase region. S-adenosyl-L-methionine is bound at residue proline 231. The active-site Proton acceptor is the aspartate 254. Catalysis depends on lysine 276, which acts as the Proton donor. Residues glycine 307–aspartate 309, isoleucine 312, threonine 337–alanine 338, methionine 389, and glycine 418 contribute to the S-adenosyl-L-methionine site.

It in the N-terminal section; belongs to the precorrin-2 dehydrogenase / sirohydrochlorin ferrochelatase family. This sequence in the C-terminal section; belongs to the precorrin methyltransferase family.

It catalyses the reaction uroporphyrinogen III + 2 S-adenosyl-L-methionine = precorrin-2 + 2 S-adenosyl-L-homocysteine + H(+). It carries out the reaction precorrin-2 + NAD(+) = sirohydrochlorin + NADH + 2 H(+). The catalysed reaction is siroheme + 2 H(+) = sirohydrochlorin + Fe(2+). It participates in cofactor biosynthesis; adenosylcobalamin biosynthesis; precorrin-2 from uroporphyrinogen III: step 1/1. The protein operates within cofactor biosynthesis; adenosylcobalamin biosynthesis; sirohydrochlorin from precorrin-2: step 1/1. It functions in the pathway porphyrin-containing compound metabolism; siroheme biosynthesis; precorrin-2 from uroporphyrinogen III: step 1/1. Its pathway is porphyrin-containing compound metabolism; siroheme biosynthesis; siroheme from sirohydrochlorin: step 1/1. It participates in porphyrin-containing compound metabolism; siroheme biosynthesis; sirohydrochlorin from precorrin-2: step 1/1. Functionally, multifunctional enzyme that catalyzes the SAM-dependent methylations of uroporphyrinogen III at position C-2 and C-7 to form precorrin-2 via precorrin-1. Then it catalyzes the NAD-dependent ring dehydrogenation of precorrin-2 to yield sirohydrochlorin. Finally, it catalyzes the ferrochelation of sirohydrochlorin to yield siroheme. The protein is Siroheme synthase 1 of Pectobacterium atrosepticum (strain SCRI 1043 / ATCC BAA-672) (Erwinia carotovora subsp. atroseptica).